Here is a 123-residue protein sequence, read N- to C-terminus: Large ribosomal subunit protein bL12 (123 aa).

The protein belongs to the bacterial ribosomal protein bL12 family. Homodimer. Part of the ribosomal stalk of the 50S ribosomal subunit. Forms a multimeric L10(L12)X complex, where L10 forms an elongated spine to which 2 to 4 L12 dimers bind in a sequential fashion. Binds GTP-bound translation factors.

Its function is as follows. Forms part of the ribosomal stalk which helps the ribosome interact with GTP-bound translation factors. Is thus essential for accurate translation. The sequence is that of Large ribosomal subunit protein bL12 from Salmonella arizonae (strain ATCC BAA-731 / CDC346-86 / RSK2980).